The following is a 436-amino-acid chain: Glutamate-1-semialdehyde 2,1-aminomutase (436 aa).

K272 bears the N6-(pyridoxal phosphate)lysine mark.

The protein belongs to the class-III pyridoxal-phosphate-dependent aminotransferase family. HemL subfamily. As to quaternary structure, homodimer. Requires pyridoxal 5'-phosphate as cofactor.

The protein localises to the cytoplasm. It carries out the reaction (S)-4-amino-5-oxopentanoate = 5-aminolevulinate. It functions in the pathway porphyrin-containing compound metabolism; protoporphyrin-IX biosynthesis; 5-aminolevulinate from L-glutamyl-tRNA(Glu): step 2/2. The protein operates within porphyrin-containing compound metabolism; chlorophyll biosynthesis. In Methylibium petroleiphilum (strain ATCC BAA-1232 / LMG 22953 / PM1), this protein is Glutamate-1-semialdehyde 2,1-aminomutase.